The following is a 572-amino-acid chain: Urease subunit alpha (572 aa).

Residues 134 to 572 (GGIDAHVHFI…LPMAQRYFLF (439 aa)) form the Urease domain. Ni(2+) is bound by residues H139, H141, and K222. K222 is subject to N6-carboxylysine. Substrate is bound at residue H224. Residues H251 and H277 each coordinate Ni(2+). The active-site Proton donor is H325. Ni(2+) is bound at residue D365.

The protein belongs to the metallo-dependent hydrolases superfamily. Urease alpha subunit family. Heterotrimer of UreA (gamma), UreB (beta) and UreC (alpha) subunits. Three heterotrimers associate to form the active enzyme. Ni cation is required as a cofactor. Post-translationally, carboxylation allows a single lysine to coordinate two nickel ions.

The protein localises to the cytoplasm. It catalyses the reaction urea + 2 H2O + H(+) = hydrogencarbonate + 2 NH4(+). It functions in the pathway nitrogen metabolism; urea degradation; CO(2) and NH(3) from urea (urease route): step 1/1. The polypeptide is Urease subunit alpha (Synechococcus sp. (strain JA-2-3B'a(2-13)) (Cyanobacteria bacterium Yellowstone B-Prime)).